The chain runs to 78 residues: Large ribosomal subunit protein uL29 (78 aa).

This sequence belongs to the universal ribosomal protein uL29 family.

This Salinispora arenicola (strain CNS-205) protein is Large ribosomal subunit protein uL29.